Here is a 492-residue protein sequence, read N- to C-terminus: Catalase isozyme 1 (492 aa).

Catalysis depends on residues His65 and Asn138. Tyr348 lines the heme pocket.

It belongs to the catalase family. Homotetramer. Requires heme as cofactor. As to expression, in whole endosperms (aleurones plus starchy endosperm), in isolated aleurones and in developing seeds.

The protein localises to the peroxisome. Its subcellular location is the glyoxysome. It carries out the reaction 2 H2O2 = O2 + 2 H2O. Its function is as follows. Occurs in almost all aerobically respiring organisms and serves to protect cells from the toxic effects of hydrogen peroxide. The protein is Catalase isozyme 1 (CAT1) of Hordeum vulgare (Barley).